A 458-amino-acid polypeptide reads, in one-letter code: Argininosuccinate lyase (458 aa).

It belongs to the lyase 1 family. Argininosuccinate lyase subfamily.

It is found in the cytoplasm. It catalyses the reaction 2-(N(omega)-L-arginino)succinate = fumarate + L-arginine. Its pathway is amino-acid biosynthesis; L-arginine biosynthesis; L-arginine from L-ornithine and carbamoyl phosphate: step 3/3. This is Argininosuccinate lyase from Trichlorobacter lovleyi (strain ATCC BAA-1151 / DSM 17278 / SZ) (Geobacter lovleyi).